The sequence spans 353 residues: Guanine nucleotide-binding protein subunit beta-5 (353 aa).

WD repeat units lie at residues 61–100, 103–142, 151–192, 194–236, 237–276, 278–320, and 323–352; these read GHGN…KEHA, MPCT…NENM, MHTN…QSFH, HGAD…QAFE, THES…EVAI, SKES…RVSI, and GHEN…LRVW.

The protein belongs to the WD repeat G protein beta family. Component of a complex composed of RGS9 (isoform RGS9-1), GNB5 and RGS9BP; within this complex, the presence of GNB5 stabilizes both itself and RGS9 and increases RGS9 GTPase-activating protein (GAP) activity. Interacts with RGS7, forming the RGS7-GNB5 complex; within this complex, the presence of GNB5 increases RGS7 GTPase-activating protein (GAP) activity. Interacts with GPR158; promotes the GTPase activator activity of the RGS7-GNB5 complex in absence of glycine, in contrast GTPase activator activity of the RGS7-GNB5 complex is inhibited in presence of glycine. Interacts with RGS6. As to expression, detected in brain.

It localises to the membrane. In terms of biological role, enhances GTPase-activating protein (GAP) activity of regulator of G protein signaling (RGS) proteins, such as RGS7 and RGS9, hence involved in the termination of the signaling initiated by the G protein coupled receptors (GPCRs) by accelerating the GTP hydrolysis on the G-alpha subunits, thereby promoting their inactivation. Increases RGS7 GTPase-activating protein (GAP) activity, thereby regulating mood and cognition. Increases RGS9 GTPase-activating protein (GAP) activity, hence contributes to the deactivation of G protein signaling initiated by D(2) dopamine receptors. May play an important role in neuronal signaling, including in the parasympathetic, but not sympathetic, control of heart rate. The protein is Guanine nucleotide-binding protein subunit beta-5 (Gnb5) of Rattus norvegicus (Rat).